An 892-amino-acid chain; its full sequence is Alpha-actinin-1 (892 aa).

Methionine 1 carries the post-translational modification N-acetylmethionine. The segment at 1-247 (MDHYDSQQTN…IMTYVSSFYH (247 aa)) is actin-binding. Serine 6 carries the post-translational modification Phosphoserine. Tyrosine 12 bears the Phosphotyrosine; by FAK1 mark. 2 Calponin-homology (CH) domains span residues 31–135 (KQQR…LRFA) and 144–250 (TSAK…HAFS). An N6-acetyllysine mark is found at lysine 95 and lysine 195. Spectrin repeat units follow at residues 274–384 (QLME…WLLN), 394–499 (HLAE…ALER), 509–620 (QLYL…ALTE), and 630–733 (RLRK…EVEN). The tract at residues 274 to 733 (QLMEDYEKLA…IARTINEVEN (460 aa)) is interaction with DDN. The residue at position 471 (serine 471) is a Phosphoserine. Residue lysine 676 is modified to N6-acetyllysine. Position 677 is a phosphoserine (serine 677). 2 consecutive EF-hand domains span residues 746 to 781 (EQMNEFRASFNHFDRDHSGTLGPEEFKACLISLGYD) and 787 to 822 (QGEAEFARIMSIVDPNRLGVVTFQAFIDFMSRETAD). 5 residues coordinate Ca(2+): aspartate 759, aspartate 761, serine 763, threonine 765, and glutamate 770. Serine 890 carries the phosphoserine modification.

The protein belongs to the alpha-actinin family. As to quaternary structure, homodimer; antiparallel. Interacts with MYOZ2, TTID and LPP. Interacts with DDN. Interacts with PSD. Interacts with MICALL2. Interacts with DNM2 and CTTN. Interacts with PDLIM1. Interacts with PDLIM2. Interacts with PDLIM4 (via PDZ domain). Interacts with IGSF8.

The protein resides in the cytoplasm. The protein localises to the cytoskeleton. It localises to the myofibril. Its subcellular location is the sarcomere. It is found in the z line. The protein resides in the cell membrane. The protein localises to the cell junction. It localises to the cell projection. Its subcellular location is the ruffle. Functionally, F-actin cross-linking protein which is thought to anchor actin to a variety of intracellular structures. Association with IGSF8 regulates the immune synapse formation and is required for efficient T-cell activation. In Bos taurus (Bovine), this protein is Alpha-actinin-1 (ACTN1).